The chain runs to 434 residues: Trigger factor (434 aa).

In terms of domain architecture, PPIase FKBP-type spans 160 to 245 (GDKAKINFVG…LNEVQAANLP (86 aa)).

The protein belongs to the FKBP-type PPIase family. Tig subfamily.

The protein localises to the cytoplasm. It carries out the reaction [protein]-peptidylproline (omega=180) = [protein]-peptidylproline (omega=0). In terms of biological role, involved in protein export. Acts as a chaperone by maintaining the newly synthesized protein in an open conformation. Functions as a peptidyl-prolyl cis-trans isomerase. The chain is Trigger factor from Shewanella woodyi (strain ATCC 51908 / MS32).